The following is a 359-amino-acid chain: tRNA N6-adenosine threonylcarbamoyltransferase (359 aa).

His115 and His119 together coordinate Fe cation. Substrate contacts are provided by residues 137 to 141 (LVSGG), Asp170, Gly183, and Asn283. Asp311 contacts Fe cation. The interval 328-359 (APDSLDIAPRSRWPLDEKSAPVFGTGRRGAKA) is disordered.

It belongs to the KAE1 / TsaD family. It depends on Fe(2+) as a cofactor.

Its subcellular location is the cytoplasm. It carries out the reaction L-threonylcarbamoyladenylate + adenosine(37) in tRNA = N(6)-L-threonylcarbamoyladenosine(37) in tRNA + AMP + H(+). Its function is as follows. Required for the formation of a threonylcarbamoyl group on adenosine at position 37 (t(6)A37) in tRNAs that read codons beginning with adenine. Is involved in the transfer of the threonylcarbamoyl moiety of threonylcarbamoyl-AMP (TC-AMP) to the N6 group of A37, together with TsaE and TsaB. TsaD likely plays a direct catalytic role in this reaction. This is tRNA N6-adenosine threonylcarbamoyltransferase from Brucella suis (strain ATCC 23445 / NCTC 10510).